The following is a 312-amino-acid chain: Ribosomal protein L11 methyltransferase (312 aa).

The S-adenosyl-L-methionine site is built by T163, G184, D206, and N248.

This sequence belongs to the methyltransferase superfamily. PrmA family.

The protein resides in the cytoplasm. It catalyses the reaction L-lysyl-[protein] + 3 S-adenosyl-L-methionine = N(6),N(6),N(6)-trimethyl-L-lysyl-[protein] + 3 S-adenosyl-L-homocysteine + 3 H(+). Its function is as follows. Methylates ribosomal protein L11. This chain is Ribosomal protein L11 methyltransferase, found in Clostridium botulinum (strain 657 / Type Ba4).